Consider the following 236-residue polypeptide: MLKIISGKYKNQIIPTAQNIKYRPSTGKLKEAIFSILTSGEFIGNKLFNENTQILDLFAGSGSLAFESLSRGAGFATLIDIDTYSLKIAAGFAKSLNIENNVHFININALNLQKTTRYLSKQTDRNEFITTAESYIGISKHKSTNITYKLPLKEQFCNMSNKVFDLVFIDPPYNKDIVPKVMKLLIKNNWLKNGTIIVIEMSKTDDYDLDKNIEIIRAKLYGQSKLLVLRYSSHLR.

Positions 117–160 (RYLSKQTDRNEFITTAESYIGISKHKSTNITYKLPLKEQFCNMS) constitute an RPE1 insert domain.

This is an uncharacterized protein from Rickettsia prowazekii (strain Madrid E).